A 619-amino-acid polypeptide reads, in one-letter code: DNA mismatch repair protein MutL (619 aa).

The disordered stretch occupies residues 358–401 (GGNQFARPSEAREAATRFSITSSREPAASGGSSGGASWPHAQPG).

This sequence belongs to the DNA mismatch repair MutL/HexB family.

Its function is as follows. This protein is involved in the repair of mismatches in DNA. It is required for dam-dependent methyl-directed DNA mismatch repair. May act as a 'molecular matchmaker', a protein that promotes the formation of a stable complex between two or more DNA-binding proteins in an ATP-dependent manner without itself being part of a final effector complex. This is DNA mismatch repair protein MutL from Klebsiella pneumoniae (strain 342).